The primary structure comprises 393 residues: Outer membrane protein assembly factor BamB (393 aa).

Residues 1–19 (MQLRKTLLVGLVSVALLSG) form the signal peptide. A lipid anchor (N-palmitoyl cysteine) is attached at Cys-20. Residue Cys-20 is the site of S-diacylglycerol cysteine attachment.

This sequence belongs to the BamB family. As to quaternary structure, part of the Bam complex, which is composed of the outer membrane protein BamA, and four lipoproteins BamB, BamC, BamD and BamE.

It is found in the cell outer membrane. Its function is as follows. Part of the outer membrane protein assembly complex, which is involved in assembly and insertion of beta-barrel proteins into the outer membrane. This chain is Outer membrane protein assembly factor BamB, found in Yersinia pestis.